A 65-amino-acid chain; its full sequence is Large ribosomal subunit protein bL35 (65 aa).

Belongs to the bacterial ribosomal protein bL35 family.

The sequence is that of Large ribosomal subunit protein bL35 from Synechococcus sp. (strain CC9605).